The sequence spans 684 residues: Protein-glutamine gamma-glutamyltransferase 4 (684 aa).

Residues Cys-268, His-327, and Asp-350 contribute to the active site. Asn-390, Asp-392, Glu-442, and Glu-447 together coordinate Ca(2+).

The protein belongs to the transglutaminase superfamily. Transglutaminase family. As to quaternary structure, homodimer. Ca(2+) is required as a cofactor. Prostate.

The enzyme catalyses L-glutaminyl-[protein] + L-lysyl-[protein] = [protein]-L-lysyl-N(6)-5-L-glutamyl-[protein] + NH4(+). In terms of biological role, associated with the mammalian reproductive process. Catalyzes the cross-linking of proteins and the conjugation of polyamines to specific proteins in the seminal tract. The chain is Protein-glutamine gamma-glutamyltransferase 4 (TGM4) from Homo sapiens (Human).